A 195-amino-acid polypeptide reads, in one-letter code: Glycerol-3-phosphate acyltransferase (195 aa).

The next 6 helical transmembrane spans lie at 2-22 (IFFS…SSAI), 54-74 (IAIS…WLGY), 80-100 (PIFL…PIFF), 107-127 (GVAT…IVMI), 132-152 (LTVL…FIIP), and 155-175 (AWHF…LVVI).

This sequence belongs to the PlsY family. In terms of assembly, probably interacts with PlsX.

Its subcellular location is the cell inner membrane. It carries out the reaction an acyl phosphate + sn-glycerol 3-phosphate = a 1-acyl-sn-glycero-3-phosphate + phosphate. The protein operates within lipid metabolism; phospholipid metabolism. Functionally, catalyzes the transfer of an acyl group from acyl-phosphate (acyl-PO(4)) to glycerol-3-phosphate (G3P) to form lysophosphatidic acid (LPA). This enzyme utilizes acyl-phosphate as fatty acyl donor, but not acyl-CoA or acyl-ACP. The chain is Glycerol-3-phosphate acyltransferase from Blochmanniella pennsylvanica (strain BPEN).